Here is a 220-residue protein sequence, read N- to C-terminus: uncharacterized protein (220 aa).

This is an uncharacterized protein from Mycoplasma pneumoniae (strain ATCC 29342 / M129 / Subtype 1) (Mycoplasmoides pneumoniae).